Here is a 201-residue protein sequence, read N- to C-terminus: tRNA (guanine-N(7)-)-methyltransferase (201 aa).

S-adenosyl-L-methionine contacts are provided by E33, E58, D85, and D106. The active site involves D106. Residues K110, D142, and 180-183 each bind substrate; that span reads TTYE.

It belongs to the class I-like SAM-binding methyltransferase superfamily. TrmB family.

It carries out the reaction guanosine(46) in tRNA + S-adenosyl-L-methionine = N(7)-methylguanosine(46) in tRNA + S-adenosyl-L-homocysteine. The protein operates within tRNA modification; N(7)-methylguanine-tRNA biosynthesis. Its function is as follows. Catalyzes the formation of N(7)-methylguanine at position 46 (m7G46) in tRNA. This chain is tRNA (guanine-N(7)-)-methyltransferase, found in Mesomycoplasma hyopneumoniae (strain 232) (Mycoplasma hyopneumoniae).